An 88-amino-acid polypeptide reads, in one-letter code: Putative defensin-like protein 228 (88 aa).

Residues 1 to 27 form the signal peptide; the sequence is MMKSAILLMVSCVFMFLVVSYIQDVEG. Disulfide bonds link C32–C88, C42–C66, C50–C82, and C64–C84.

Belongs to the DEFL family.

It localises to the secreted. The polypeptide is Putative defensin-like protein 228 (SCRL3) (Arabidopsis thaliana (Mouse-ear cress)).